The sequence spans 328 residues: Homeobox protein Hox-C13 (328 aa).

A disordered region spans residues Ala23–Ser48. The span at Gly27 to Ser45 shows a compositional bias: gly residues. A DNA-binding region (homeobox) is located at residues Gly258–Val317.

It belongs to the Abd-B homeobox family. As to expression, expressed in differentiating keratinocytes. In the hair follicle lower matrix, expressed in all 3 hair shaft-forming compartments, i.e. cuticle, cortex and medulla. Expression stops sharply at the boundary with the germinal matrix compartment.

The protein resides in the nucleus. In terms of biological role, transcription factor which plays a role in hair follicle differentiation. Regulates FOXQ1 expression and that of other hair-specific genes. The protein is Homeobox protein Hox-C13 (Hoxc13) of Mus musculus (Mouse).